The sequence spans 339 residues: Serpentine receptor class alpha-21 (339 aa).

5 helical membrane passes run 30–50 (FNFL…WLAI), 150–170 (FIAV…FYIA), 199–219 (VRTV…YLSV), 250–270 (ILIV…NLLL), and 282–302 (VLVA…PLVI).

Belongs to the nematode receptor-like protein sra family.

It localises to the membrane. The protein is Serpentine receptor class alpha-21 (sra-21) of Caenorhabditis elegans.